A 401-amino-acid chain; its full sequence is Argininosuccinate synthase (401 aa).

An ATP-binding site is contributed by 8 to 16 (AYSGGLDTS). An L-citrulline-binding site is contributed by Y87. Position 117 (G117) interacts with ATP. Residues T119, N123, and D124 each contribute to the L-aspartate site. L-citrulline is bound at residue N123. L-citrulline is bound by residues R127, S175, E259, and Y271.

It belongs to the argininosuccinate synthase family. Type 1 subfamily. As to quaternary structure, homotetramer.

The protein localises to the cytoplasm. It catalyses the reaction L-citrulline + L-aspartate + ATP = 2-(N(omega)-L-arginino)succinate + AMP + diphosphate + H(+). Its pathway is amino-acid biosynthesis; L-arginine biosynthesis; L-arginine from L-ornithine and carbamoyl phosphate: step 2/3. In Paenarthrobacter aurescens (strain TC1), this protein is Argininosuccinate synthase.